A 74-amino-acid polypeptide reads, in one-letter code: DNA-directed RNA polymerase subunit omega (74 aa).

The protein belongs to the RNA polymerase subunit omega family. In terms of assembly, the RNAP catalytic core consists of 2 alpha, 1 beta/beta' and 1 omega subunit. When a sigma factor is associated with the core the holoenzyme is formed, which can initiate transcription.

It carries out the reaction RNA(n) + a ribonucleoside 5'-triphosphate = RNA(n+1) + diphosphate. Promotes RNA polymerase assembly. Latches the N- and C-terminal regions of the beta' subunit thereby facilitating its interaction with the beta and alpha subunits. The chain is DNA-directed RNA polymerase subunit omega from Helicobacter hepaticus (strain ATCC 51449 / 3B1).